The chain runs to 638 residues: Protein disulfide-isomerase A4 (638 aa).

The signal sequence occupies residues 1 to 20; the sequence is MKLRKAWLLVLLLALTQLLA. Thioredoxin domains follow at residues 21–162 and 162–294; these read AASA…EVSQ and QPDW…EFLK. Positions 24–50 are disordered; that stretch reads AGDAHEDTSDTENATEEEEEEDDDDLE. Residues 32-50 are compositionally biased toward acidic residues; sequence SDTENATEEEEEEDDDDLE. N36 is a glycosylation site (N-linked (GlcNAc...) asparagine). The short motif at 84 to 87 is the CXXC element; that stretch reads CGHC. Disulfide bonds link C84-C87 and C199-C202. Residue K359 is modified to N6-acetyllysine. The Thioredoxin 3 domain occupies 498–629; that stretch reads FKKGKLKPVI…LSKFIDEHAT (132 aa). The CXXC signature appears at 548–551; that stretch reads CGHC. C548 and C551 are disulfide-bonded. The short motif at 635–638 is the Prevents secretion from ER element; the sequence is KEEL.

The protein belongs to the protein disulfide isomerase family. In terms of assembly, part of a large chaperone multiprotein complex comprising DNAJB11, HSP90B1, HSPA5, HYOU, PDIA2, PDIA4, PDIA6, PPIB, SDF2L1, UGGT1 and very small amounts of ERP29, but not, or at very low levels, CALR nor CANX. Component of a complex containing at least CRELD2, MANF, MATN3 and PDIA4.

It localises to the endoplasmic reticulum lumen. The protein resides in the melanosome. The catalysed reaction is Catalyzes the rearrangement of -S-S- bonds in proteins.. The polypeptide is Protein disulfide-isomerase A4 (Pdia4) (Mus musculus (Mouse)).